We begin with the raw amino-acid sequence, 105 residues long: Large ribosomal subunit protein eL36 (105 aa).

Belongs to the eukaryotic ribosomal protein eL36 family. In terms of assembly, component of the large ribosomal subunit.

It is found in the cytoplasm. It localises to the cytosol. Component of the large ribosomal subunit. The ribosome is a large ribonucleoprotein complex responsible for the synthesis of proteins in the cell. This is Large ribosomal subunit protein eL36 (rpl36) from Xenopus laevis (African clawed frog).